A 200-amino-acid polypeptide reads, in one-letter code: Recombination protein RecR (200 aa).

The C4-type zinc-finger motif lies at 58-73 (CSICGNITEDDPCPIC). Positions 81-177 (SQILVVEQSQ…KVTRLAHGLS (97 aa)) constitute a Toprim domain.

The protein belongs to the RecR family.

Its function is as follows. May play a role in DNA repair. It seems to be involved in an RecBC-independent recombinational process of DNA repair. It may act with RecF and RecO. The chain is Recombination protein RecR from Limosilactobacillus reuteri (strain DSM 20016) (Lactobacillus reuteri).